A 418-amino-acid chain; its full sequence is Actin-related protein 3 (418 aa).

Position 2 is an N-acetylalanine (alanine 2). An N6-acetyllysine mark is found at lysine 240, lysine 244, lysine 251, and lysine 254.

Belongs to the actin family. ARP3 subfamily. Component of the Arp2/3 complex composed of ACTR2/ARP2, ACTR3/ARP3, ARPC1B/p41-ARC, ARPC2/p34-ARC, ARPC3/p21-ARC, ARPC4/p20-ARC and ARPC5/p16-ARC. Interacts with WHDC1. Interacts weakly with MEFV. Interacts with AVIL. In terms of assembly, (Microbial infection) Interacts with bacterium B.thailandensis BimA.

Its subcellular location is the cytoplasm. It localises to the cytoskeleton. It is found in the cell projection. The protein localises to the nucleus. Functionally, ATP-binding component of the Arp2/3 complex, a multiprotein complex that mediates actin polymerization upon stimulation by nucleation-promoting factor (NPF). The Arp2/3 complex mediates the formation of branched actin networks in the cytoplasm, providing the force for cell motility. Seems to contact the pointed end of the daughter actin filament. In podocytes, required for the formation of lamellipodia downstream of AVIL and PLCE1 regulation. In addition to its role in the cytoplasmic cytoskeleton, the Arp2/3 complex also promotes actin polymerization in the nucleus, thereby regulating gene transcription and repair of damaged DNA. The Arp2/3 complex promotes homologous recombination (HR) repair in response to DNA damage by promoting nuclear actin polymerization, leading to drive motility of double-strand breaks (DSBs). Plays a role in ciliogenesis. The protein is Actin-related protein 3 (Actr3) of Mus musculus (Mouse).